The sequence spans 367 residues: HTH-type transcriptional regulator GbdR (367 aa).

The 99-residue stretch at Gln-227–Gly-325 folds into the HTH araC/xylS-type domain. 2 DNA-binding regions (H-T-H motif) span residues Asp-244 to Leu-265 and Ile-292 to Phe-315.

In terms of biological role, specific regulator of choline metabolism, which activates transcription of at least 25 genes from 11 promoters in response to choline metabolites. Required for the induction of plcH, encoding the phospholipase C, and pchP, encoding the phosphorylcholine phosphatase, in response to glycine betaine (GB) and dimethylglycine (DMG). Also controls the expression of gbcAB and dgcAB, which are required for GB and DMG degradation, respectively, in response to both GB and DMG. The GbdR regulon also includes genes encoding sarcosine, glycine and serine catabolic enzymes, the BetX and CbcXWV quaternary amine transport proteins and the acetylcholine esterase gene, choE. Acts by binding directly to the promoter region of the genes. May play an important role during P.aeruginosa interactions with eukaryotes. The sequence is that of HTH-type transcriptional regulator GbdR from Pseudomonas aeruginosa (strain UCBPP-PA14).